A 369-amino-acid chain; its full sequence is Phospho-N-acetylmuramoyl-pentapeptide-transferase (369 aa).

10 consecutive transmembrane segments (helical) span residues 2-22 (IPLLMGAGISLALVMIGTQLF), 55-75 (AVVIGTVILAYLLTHLISWWI), 82-102 (PSVSGWLLLLLMAGMGLVGFL), 120-140 (AKLILQAAIGILFAVLAINFA), 163-183 (LAFAGAGLGVLLFVIWANLII), 196-216 (LDGLAAGASVMVFGAYTLIGI), 240-260 (PLDLALLAAIIFGALIGFLWW), 267-287 (IFMGDTGSLAIGGAIAGFAIL), 292-312 (ILLAIIGGLFVLITLSVILQV), and 349-369 (ILGGLLVAIGLGAFYAEWVVF).

Belongs to the glycosyltransferase 4 family. MraY subfamily. Mg(2+) serves as cofactor.

It localises to the cell membrane. It catalyses the reaction UDP-N-acetyl-alpha-D-muramoyl-L-alanyl-gamma-D-glutamyl-meso-2,6-diaminopimeloyl-D-alanyl-D-alanine + di-trans,octa-cis-undecaprenyl phosphate = di-trans,octa-cis-undecaprenyl diphospho-N-acetyl-alpha-D-muramoyl-L-alanyl-D-glutamyl-meso-2,6-diaminopimeloyl-D-alanyl-D-alanine + UMP. It participates in cell wall biogenesis; peptidoglycan biosynthesis. Functionally, catalyzes the initial step of the lipid cycle reactions in the biosynthesis of the cell wall peptidoglycan: transfers peptidoglycan precursor phospho-MurNAc-pentapeptide from UDP-MurNAc-pentapeptide onto the lipid carrier undecaprenyl phosphate, yielding undecaprenyl-pyrophosphoryl-MurNAc-pentapeptide, known as lipid I. This is Phospho-N-acetylmuramoyl-pentapeptide-transferase from Renibacterium salmoninarum (strain ATCC 33209 / DSM 20767 / JCM 11484 / NBRC 15589 / NCIMB 2235).